A 255-amino-acid polypeptide reads, in one-letter code: Zinc import ATP-binding protein ZnuC (255 aa).

The 216-residue stretch at 4 to 219 (VDVDGLSLRY…PEYRALFGTG (216 aa)) folds into the ABC transporter domain. ATP is bound at residue 36-43 (GPNGSGKT). The disordered stretch occupies residues 234–255 (EHDHHDGCAHGQATEDRTEAAE).

Belongs to the ABC transporter superfamily. Zinc importer (TC 3.A.1.15.5) family. In terms of assembly, the complex is composed of two ATP-binding proteins (ZnuC), two transmembrane proteins (ZnuB) and a solute-binding protein (ZnuA).

It is found in the cell inner membrane. The enzyme catalyses Zn(2+)(out) + ATP(in) + H2O(in) = Zn(2+)(in) + ADP(in) + phosphate(in) + H(+)(in). Part of the ABC transporter complex ZnuABC involved in zinc import. Responsible for energy coupling to the transport system. This chain is Zinc import ATP-binding protein ZnuC, found in Roseobacter denitrificans (strain ATCC 33942 / OCh 114) (Erythrobacter sp. (strain OCh 114)).